The primary structure comprises 255 residues: Triosephosphate isomerase (255 aa).

Residue 9 to 11 (NWK) coordinates substrate. The Electrophile role is filled by H95. E167 serves as the catalytic Proton acceptor. Substrate contacts are provided by residues G173, S212, and 233–234 (GG).

Belongs to the triosephosphate isomerase family. Homodimer.

The protein localises to the cytoplasm. The catalysed reaction is D-glyceraldehyde 3-phosphate = dihydroxyacetone phosphate. The protein operates within carbohydrate biosynthesis; gluconeogenesis. It functions in the pathway carbohydrate degradation; glycolysis; D-glyceraldehyde 3-phosphate from glycerone phosphate: step 1/1. Its function is as follows. Involved in the gluconeogenesis. Catalyzes stereospecifically the conversion of dihydroxyacetone phosphate (DHAP) to D-glyceraldehyde-3-phosphate (G3P). In Photorhabdus laumondii subsp. laumondii (strain DSM 15139 / CIP 105565 / TT01) (Photorhabdus luminescens subsp. laumondii), this protein is Triosephosphate isomerase.